The chain runs to 215 residues: Ras-related protein Rab-42 (215 aa).

GTP-binding residues include glycine 19, glycine 21, lysine 22, threonine 23, and threonine 44. Mg(2+)-binding residues include threonine 23, threonine 44, and aspartate 68. GTP-binding residues include glycine 71, lysine 128, aspartate 130, alanine 157, and lysine 158. The tract at residues 196–215 (HRSPNPRSSSRKQDSGTCQC) is disordered. S-geranylgeranyl cysteine attachment occurs at residues cysteine 213 and cysteine 215.

The protein belongs to the small GTPase superfamily. Rab family. It depends on Mg(2+) as a cofactor.

The protein resides in the membrane. The catalysed reaction is GTP + H2O = GDP + phosphate + H(+). With respect to regulation, regulated by guanine nucleotide exchange factors (GEFs) which promote the exchange of bound GDP for free GTP. Regulated by GTPase activating proteins (GAPs) which increase the GTP hydrolysis activity. Inhibited by GDP dissociation inhibitors (GDIs). Its function is as follows. The small GTPases Rab are key regulators of intracellular membrane trafficking, from the formation of transport vesicles to their fusion with membranes. Rabs cycle between an inactive GDP-bound form and an active GTP-bound form that is able to recruit to membranes different sets of downstream effectors directly responsible for vesicle formation, movement, tethering and fusion. The physiological function of RAB42 remains undefined. The sequence is that of Ras-related protein Rab-42 from Mus musculus (Mouse).